Reading from the N-terminus, the 172-residue chain is Ribosome maturation factor RimP (172 aa).

It belongs to the RimP family.

The protein resides in the cytoplasm. Required for maturation of 30S ribosomal subunits. In Chlorobium phaeovibrioides (strain DSM 265 / 1930) (Prosthecochloris vibrioformis (strain DSM 265)), this protein is Ribosome maturation factor RimP.